We begin with the raw amino-acid sequence, 484 residues long: Cobyric acid synthase (484 aa).

Residues Ala-246–Ala-437 enclose the GATase cobBQ-type domain. Residue Cys-327 is the Nucleophile of the active site. The active site involves His-429.

The protein belongs to the CobB/CobQ family. CobQ subfamily.

It functions in the pathway cofactor biosynthesis; adenosylcobalamin biosynthesis. Functionally, catalyzes amidations at positions B, D, E, and G on adenosylcobyrinic A,C-diamide. NH(2) groups are provided by glutamine, and one molecule of ATP is hydrogenolyzed for each amidation. The sequence is that of Cobyric acid synthase from Paraburkholderia phymatum (strain DSM 17167 / CIP 108236 / LMG 21445 / STM815) (Burkholderia phymatum).